A 38-amino-acid polypeptide reads, in one-letter code: MVSQNPNRQKVELNRTSLFWGLLLIFVLAILFSSYIFN.

Residues 17 to 37 (SLFWGLLLIFVLAILFSSYIF) traverse the membrane as a helical segment.

It belongs to the PsbL family. PSII is composed of 1 copy each of membrane proteins PsbA, PsbB, PsbC, PsbD, PsbE, PsbF, PsbH, PsbI, PsbJ, PsbK, PsbL, PsbM, PsbT, PsbX, PsbY, PsbZ, Psb30/Ycf12, at least 3 peripheral proteins of the oxygen-evolving complex and a large number of cofactors. It forms dimeric complexes.

It is found in the plastid. The protein resides in the cyanelle thylakoid membrane. In terms of biological role, one of the components of the core complex of photosystem II (PSII). PSII is a light-driven water:plastoquinone oxidoreductase that uses light energy to abstract electrons from H(2)O, generating O(2) and a proton gradient subsequently used for ATP formation. It consists of a core antenna complex that captures photons, and an electron transfer chain that converts photonic excitation into a charge separation. This subunit is found at the monomer-monomer interface and is required for correct PSII assembly and/or dimerization. This Cyanophora paradoxa protein is Photosystem II reaction center protein L.